A 367-amino-acid polypeptide reads, in one-letter code: MDCKYLKECGSCTLFTSYSEQISFKTDLIKQNFSHFYDGKFDLFSSSPKHYRTRAEFGIWHEGSKLSYTMHASEKGKKVFIDECPKVCEQISHLMPRLLESLQDDEILRTKLFGVEFIACKSGTLVTLLYHKKLDSEFEAAMKILASKLDVMILARSRGQKLLSGELNLVDELNVDGQIYKFSLSENAFIQPNKAVNEKMIAWAKECVQSGADLLELYCGHGNFTIPLSFKFKNVLATEISKSSIANALKNCELNGVENIKFLRMDADELMSAFAGVREFNRLKDIKLSDFNFSHVLVDPPRAGLSESVINFIRNFKNIIYISCNPETLKENLNELTKSHKVIKFALFDQFANTHHIECGVLLEAKR.

Residues Gln-191, Tyr-218, Asn-223, Glu-239, and Asp-299 each contribute to the S-adenosyl-L-methionine site. The active-site Nucleophile is the Cys-324. Glu-358 (proton acceptor) is an active-site residue.

The protein belongs to the class I-like SAM-binding methyltransferase superfamily. RNA M5U methyltransferase family. TrmA subfamily.

It catalyses the reaction uridine(54) in tRNA + S-adenosyl-L-methionine = 5-methyluridine(54) in tRNA + S-adenosyl-L-homocysteine + H(+). The enzyme catalyses uridine(341) in tmRNA + S-adenosyl-L-methionine = 5-methyluridine(341) in tmRNA + S-adenosyl-L-homocysteine + H(+). Its function is as follows. Dual-specificity methyltransferase that catalyzes the formation of 5-methyluridine at position 54 (m5U54) in all tRNAs, and that of position 341 (m5U341) in tmRNA (transfer-mRNA). This Campylobacter concisus (strain 13826) protein is tRNA/tmRNA (uracil-C(5))-methyltransferase.